The following is a 437-amino-acid chain: Tol-Pal system protein TolB (437 aa).

The N-terminal stretch at 1–23 (MQKRHPIIYLLITLLIFVPVSYG) is a signal peptide.

Belongs to the TolB family. The Tol-Pal system is composed of five core proteins: the inner membrane proteins TolA, TolQ and TolR, the periplasmic protein TolB and the outer membrane protein Pal. They form a network linking the inner and outer membranes and the peptidoglycan layer.

Its subcellular location is the periplasm. Part of the Tol-Pal system, which plays a role in outer membrane invagination during cell division and is important for maintaining outer membrane integrity. The polypeptide is Tol-Pal system protein TolB (Coxiella burnetii (strain RSA 493 / Nine Mile phase I)).